The chain runs to 135 residues: MATVQQLEGRWRLVDSKGFDEYMKELGVGIALRKMGAMAKPDCIITCDGKNLTIKTESTLKTTQFSCTLGEKFEETTADGRKTQTVCNFTDGALVQHQEWDGKESTITRKLKDGKLVVECVMNNVTCTRIYEKVE.

An N-acetylalanine modification is found at Ala-2. Lys-17 bears the N6-acetyllysine mark. The Nuclear localization signal motif lies at Lys-24–Lys-34. 2 residues coordinate N-eicosanoyl ethanolamine: Cys-43 and Arg-109. Cys-120 and Cys-127 are oxidised to a cystine. Residue Arg-129–Tyr-131 coordinates (9Z,12Z)-octadecadienoate. N-eicosanoyl ethanolamine is bound at residue Tyr-131. Residue Tyr-131 participates in hexadecanoate binding. Residue Tyr-131 is modified to Phosphotyrosine.

It belongs to the calycin superfamily. Fatty-acid binding protein (FABP) family. Monomer. Homodimer. In terms of tissue distribution, keratinocytes; highly expressed in psoriatic skin. Expressed in brain gray matter.

It is found in the cytoplasm. The protein resides in the nucleus. It localises to the synapse. Its subcellular location is the postsynaptic density. The protein localises to the secreted. The enzyme catalyses hexadecanoate(out) = hexadecanoate(in). The catalysed reaction is (9Z,12Z)-octadecadienoate(out) = (9Z,12Z)-octadecadienoate(in). It catalyses the reaction (9Z)-octadecenoate(out) = (9Z)-octadecenoate(in). Its function is as follows. Intracellular carrier for long-chain fatty acids and related active lipids, such as endocannabinoids, that regulate the metabolism and actions of the ligands they bind. In addition to the cytosolic transport, selectively delivers specific fatty acids from the cytosol to the nucleus, wherein they activate nuclear receptors. Delivers retinoic acid to the nuclear receptor peroxisome proliferator-activated receptor delta; which promotes proliferation and survival. May also serve as a synaptic carrier of endocannabinoid at central synapses and thus controls retrograde endocannabinoid signaling. Modulates inflammation by regulating PTGES induction via NF-kappa-B activation, and prostaglandin E2 (PGE2) biosynthesis during inflammation. May be involved in keratinocyte differentiation. This is Fatty acid-binding protein 5 from Homo sapiens (Human).